Reading from the N-terminus, the 551-residue chain is Chaperonin GroEL (551 aa).

Residues 29 to 32 (TAGP), Lys-50, 86 to 90 (DGTTT), Gly-417, and Asp-499 each bind ATP.

Belongs to the chaperonin (HSP60) family. As to quaternary structure, forms a cylinder of 14 subunits composed of two heptameric rings stacked back-to-back. Interacts with the co-chaperonin GroES.

Its subcellular location is the cytoplasm. The catalysed reaction is ATP + H2O + a folded polypeptide = ADP + phosphate + an unfolded polypeptide.. In terms of biological role, together with its co-chaperonin GroES, plays an essential role in assisting protein folding. The GroEL-GroES system forms a nano-cage that allows encapsulation of the non-native substrate proteins and provides a physical environment optimized to promote and accelerate protein folding. This chain is Chaperonin GroEL, found in Ehrlichia ruminantium (strain Gardel).